Reading from the N-terminus, the 427-residue chain is Methylenetetrahydrofolate--tRNA-(uracil-5-)-methyltransferase TrmFO (427 aa).

Residue 8-13 (GAGISG) participates in FAD binding.

Belongs to the MnmG family. TrmFO subfamily. FAD serves as cofactor.

It localises to the cytoplasm. The enzyme catalyses uridine(54) in tRNA + (6R)-5,10-methylene-5,6,7,8-tetrahydrofolate + NADH + H(+) = 5-methyluridine(54) in tRNA + (6S)-5,6,7,8-tetrahydrofolate + NAD(+). It carries out the reaction uridine(54) in tRNA + (6R)-5,10-methylene-5,6,7,8-tetrahydrofolate + NADPH + H(+) = 5-methyluridine(54) in tRNA + (6S)-5,6,7,8-tetrahydrofolate + NADP(+). Functionally, catalyzes the folate-dependent formation of 5-methyl-uridine at position 54 (M-5-U54) in all tRNAs. This Mycoplasmopsis agalactiae (strain NCTC 10123 / CIP 59.7 / PG2) (Mycoplasma agalactiae) protein is Methylenetetrahydrofolate--tRNA-(uracil-5-)-methyltransferase TrmFO.